The chain runs to 283 residues: Pantothenate synthetase 1 (283 aa).

Met30–His37 lines the ATP pocket. Catalysis depends on His37, which acts as the Proton donor. (R)-pantoate is bound at residue Gln61. Gln61 is a beta-alanine binding site. Gly147 to Asp150 provides a ligand contact to ATP. Gln153 contacts (R)-pantoate. ATP-binding positions include Val176 and Met184–Arg187.

It belongs to the pantothenate synthetase family. As to quaternary structure, homodimer.

The protein localises to the cytoplasm. It catalyses the reaction (R)-pantoate + beta-alanine + ATP = (R)-pantothenate + AMP + diphosphate + H(+). Its pathway is cofactor biosynthesis; (R)-pantothenate biosynthesis; (R)-pantothenate from (R)-pantoate and beta-alanine: step 1/1. In terms of biological role, catalyzes the condensation of pantoate with beta-alanine in an ATP-dependent reaction via a pantoyl-adenylate intermediate. The polypeptide is Pantothenate synthetase 1 (Bradyrhizobium diazoefficiens (strain JCM 10833 / BCRC 13528 / IAM 13628 / NBRC 14792 / USDA 110)).